The primary structure comprises 85 residues: MEESSEPQLDAKSKVTSQLIDFEWKLGMAVSSDSCRSLKYPYVAVMLKVADHSGQVKNKSFEMTIPQFQNFYRQFKEIAAIIETV.

Residue Met1 is modified to N-acetylmethionine. The 68-residue stretch at 18–85 folds into the COMM domain; sequence QLIDFEWKLG…KEIAAIIETV (68 aa).

This sequence belongs to the COMM domain-containing protein 6 family. In terms of assembly, component of the commander complex consisting of the CCC subcomplex and the retriever subcomplex. Component of the CCC (COMMD/CCDC22/CCDC93) subcomplex consisting of COMMD1, COMMD2, COMMD3, COMMD4, COMMD5, COMMD6, COMMD7, COMMD8, COMMD9, COMMD10, CCDC22 and CCDC93; within the complex forms a heterodimer with COMMD1. May form a homodimer with isoform 1. Interacts with RELA, RELB, NFKB1/p105. Does not interact with NFKBIB. Interacts with CCDC22, CCDC93, SCNN1B, CUL4A.

The protein localises to the nucleus. Its subcellular location is the cytoplasm. Functionally, scaffold protein in the commander complex that is essential for endosomal recycling of transmembrane cargos; the commander complex is composed of the CCC subcomplex and the retriever subcomplex. May modulate activity of cullin-RING E3 ubiquitin ligase (CRL) complexes. Down-regulates activation of NF-kappa-B. Inhibits TNF-induced NFKB1 activation. This chain is COMM domain-containing protein 6 (COMMD6), found in Bos taurus (Bovine).